Reading from the N-terminus, the 405-residue chain is Cysteine desulfurase IscS (405 aa).

Pyridoxal 5'-phosphate contacts are provided by residues alanine 75 to threonine 76, asparagine 156, glutamine 184, and serine 204 to histidine 206. The residue at position 207 (lysine 207) is an N6-(pyridoxal phosphate)lysine. Position 244 (threonine 244) interacts with pyridoxal 5'-phosphate. Cysteine 329 acts as the Cysteine persulfide intermediate in catalysis. Cysteine 329 lines the [2Fe-2S] cluster pocket.

Belongs to the class-V pyridoxal-phosphate-dependent aminotransferase family. NifS/IscS subfamily. Homodimer. Forms a heterotetramer with IscU, interacts with other sulfur acceptors. Requires pyridoxal 5'-phosphate as cofactor.

It is found in the cytoplasm. The catalysed reaction is (sulfur carrier)-H + L-cysteine = (sulfur carrier)-SH + L-alanine. It functions in the pathway cofactor biosynthesis; iron-sulfur cluster biosynthesis. In terms of biological role, master enzyme that delivers sulfur to a number of partners involved in Fe-S cluster assembly, tRNA modification or cofactor biosynthesis. Catalyzes the removal of elemental sulfur atoms from cysteine to produce alanine. Functions as a sulfur delivery protein for Fe-S cluster synthesis onto IscU, an Fe-S scaffold assembly protein, as well as other S acceptor proteins. This Acinetobacter baumannii (strain AB307-0294) protein is Cysteine desulfurase IscS.